The chain runs to 70 residues: Large ribosomal subunit protein bL31 (70 aa).

Positions 16, 18, 37, and 40 each coordinate Zn(2+).

The protein belongs to the bacterial ribosomal protein bL31 family. Type A subfamily. As to quaternary structure, part of the 50S ribosomal subunit. Zn(2+) is required as a cofactor.

Functionally, binds the 23S rRNA. This Haemophilus influenzae (strain 86-028NP) protein is Large ribosomal subunit protein bL31.